A 290-amino-acid chain; its full sequence is Transposon Ty3-G Gag polyprotein (290 aa).

Position 2 is an N-acetylserine (serine 2). The CCHC-type zinc-finger motif lies at 265-282 (RLCFYCKKEGHRLNECRA).

It is found in the cytoplasm. Functionally, capsid protein (CA) is the structural component of the virus-like particle (VLP), forming the shell that encapsulates the retrotransposons dimeric RNA genome. Nucleocapsid protein p9 (NC) forms the nucleocore that coats the retro-elements dimeric RNA. Binds these RNAs through its zinc fingers. Promotes primer tRNA(i)-Met annealing to the multipartite primer-binding site (PBS), dimerization of Ty3 RNA and initiation of reverse transcription. In Saccharomyces cerevisiae (strain ATCC 204508 / S288c) (Baker's yeast), this protein is Transposon Ty3-G Gag polyprotein (TY3A-G).